Consider the following 135-residue polypeptide: Holo-[acyl-carrier-protein] synthase (135 aa).

Mg(2+) contacts are provided by Asp7 and Glu57.

It belongs to the P-Pant transferase superfamily. AcpS family. Mg(2+) serves as cofactor.

The protein resides in the cytoplasm. The enzyme catalyses apo-[ACP] + CoA = holo-[ACP] + adenosine 3',5'-bisphosphate + H(+). Transfers the 4'-phosphopantetheine moiety from coenzyme A to a Ser of acyl-carrier-protein. The protein is Holo-[acyl-carrier-protein] synthase of Corynebacterium glutamicum (strain ATCC 13032 / DSM 20300 / JCM 1318 / BCRC 11384 / CCUG 27702 / LMG 3730 / NBRC 12168 / NCIMB 10025 / NRRL B-2784 / 534).